The primary structure comprises 117 residues: Immunoglobulin heavy variable 1-45 (117 aa).

The signal sequence occupies residues 1-19 (MDWTWRILFLVAAVTDAYS). Positions 20-44 (QMQLVQSGAEVKKTGSSVKVSCKAS) are framework-1. The region spanning 20–117 (QMQLVQSGAE…EDTAMYYCAR (98 aa)) is the Ig-like domain. A disulfide bridge links Cys41 with Cys115. The tract at residues 45 to 52 (GYTFTYRY) is complementarity-determining-1. A framework-2 region spans residues 53–69 (LHWVRQAPGQALEWMGW). The tract at residues 70-77 (ITPFNGNT) is complementarity-determining-2. The interval 78–115 (NYAQKFQDRVTITRDRSMSTAYMELSSLRSEDTAMYYC) is framework-3. A complementarity-determining-3 region spans residues 116–117 (AR).

Immunoglobulins are composed of two identical heavy chains and two identical light chains; disulfide-linked.

Its subcellular location is the secreted. It localises to the cell membrane. V region of the variable domain of immunoglobulin heavy chains that participates in the antigen recognition. Immunoglobulins, also known as antibodies, are membrane-bound or secreted glycoproteins produced by B lymphocytes. In the recognition phase of humoral immunity, the membrane-bound immunoglobulins serve as receptors which, upon binding of a specific antigen, trigger the clonal expansion and differentiation of B lymphocytes into immunoglobulins-secreting plasma cells. Secreted immunoglobulins mediate the effector phase of humoral immunity, which results in the elimination of bound antigens. The antigen binding site is formed by the variable domain of one heavy chain, together with that of its associated light chain. Thus, each immunoglobulin has two antigen binding sites with remarkable affinity for a particular antigen. The variable domains are assembled by a process called V-(D)-J rearrangement and can then be subjected to somatic hypermutations which, after exposure to antigen and selection, allow affinity maturation for a particular antigen. This Homo sapiens (Human) protein is Immunoglobulin heavy variable 1-45.